The sequence spans 364 residues: Dihydroorotate dehydrogenase (quinone) (364 aa).

FMN is bound by residues 61–65 (AGYDK) and threonine 85. Lysine 65 provides a ligand contact to substrate. Residue 110-114 (NRLGF) participates in substrate binding. Asparagine 139 and asparagine 170 together coordinate FMN. Asparagine 170 is a binding site for substrate. Serine 173 acts as the Nucleophile in catalysis. Substrate is bound at residue asparagine 175. Residues lysine 215 and serine 243 each coordinate FMN. A substrate-binding site is contributed by 244–245 (NT). Residues glycine 266, glycine 295, and 316–317 (YS) each bind FMN.

The protein belongs to the dihydroorotate dehydrogenase family. Type 2 subfamily. Monomer. The cofactor is FMN.

It is found in the cell membrane. The catalysed reaction is (S)-dihydroorotate + a quinone = orotate + a quinol. Its pathway is pyrimidine metabolism; UMP biosynthesis via de novo pathway; orotate from (S)-dihydroorotate (quinone route): step 1/1. In terms of biological role, catalyzes the conversion of dihydroorotate to orotate with quinone as electron acceptor. The chain is Dihydroorotate dehydrogenase (quinone) from Brucella melitensis biotype 2 (strain ATCC 23457).